A 530-amino-acid chain; its full sequence is MNLLETRRSLLEEMEIIENAIAERIQRNPELYYHYIQESSKVFPDTKLPRSSLIAENKIYKFKKVKRKRKQIILQQHEINIFLRDYQEKQQTFNKINRPEETQEDDKDLPNFERKLQQLEKELKNEDENFELDINSKKDKYALFSSSSDPSRRTNILSDRARDLDLNEIFTRDEQYGEYMELEQFHSLWLNVIKRGDCSLLQFLDILELFLDDEKYLLTPPMDRKNDRYMAFLLKLSKYVETFFFKSYALLDAAAVENLIKSDFEHSYCRGSLRSEAKGIYCPFCSRWFKTSSVFESHLVGKIHKKNESKRRNFVYSEYKLHRYLKYLNDEFSRTRSFVERKLAFTANERMAEMDILTQKYEAPAYDSTEKEGAEQVDGEQRDGQLQEEHLSGKSFDMPLGPDGLPMPYWLYKLHGLDREYRCEICSNKVYNGRRTFERHFNEERHIYHLRCLGIEPSSVFKGITKIKEAQELWKNMQGQSQLTSIAAVPPKPNPSQLKVPTELELEEEDEEGNVMSKKVYDELKKQGLV.

Residues 280-310 (IYCPFCSRWFKTSSVFESHLVGKIHKKNESK) form a Matrin-type 1 zinc finger. The interval 367-388 (DSTEKEGAEQVDGEQRDGQLQE) is disordered. Residues 368 to 388 (STEKEGAEQVDGEQRDGQLQE) are compositionally biased toward basic and acidic residues. A Matrin-type 2 zinc finger spans residues 421–452 (YRCEICSNKVYNGRRTFERHFNEERHIYHLRC). A disordered region spans residues 488–516 (AVPPKPNPSQLKVPTELELEEEDEEGNVM). A compositionally biased stretch (acidic residues) spans 504–513 (LELEEEDEEG).

This sequence belongs to the SF3A3 family. In terms of assembly, belongs to the CWC complex (or CEF1-associated complex), a spliceosome sub-complex reminiscent of a late-stage spliceosome composed of the U2, U5 and U6 snRNAs and at least BUD13, BUD31, BRR2, CDC40, CEF1, CLF1, CUS1, CWC2, CWC15, CWC21, CWC22, CWC23, CWC24, CWC25, CWC27, ECM2, HSH155, IST3, ISY1, LEA1, MSL1, NTC20, PRP8, PRP9, PRP11, PRP19, PRP21, PRP22, PRP45, PRP46, SLU7, SMB1, SMD1, SMD2, SMD3, SMX2, SMX3, SNT309, SNU114, SPP2, SYF1, SYF2, RSE1 and YJU2.

It localises to the nucleus. In terms of biological role, mRNA splicing factors, PRP9, PRP11, and PRP21, are necessary for binding of the U2 snRNP to the pre-mRNA in an early step of spliceosome assembly. This chain is Pre-mRNA-splicing factor PRP9 (PRP9), found in Saccharomyces cerevisiae (strain ATCC 204508 / S288c) (Baker's yeast).